We begin with the raw amino-acid sequence, 656 residues long: DNA ligase (656 aa).

NAD(+)-binding positions include 32 to 36 (DAIYD) and 81 to 82 (SL). The active-site N6-AMP-lysine intermediate is the lysine 112. Arginine 133, glutamate 167, and lysine 306 together coordinate NAD(+). 4 residues coordinate Zn(2+): cysteine 400, cysteine 403, cysteine 416, and cysteine 421. Positions 577–656 (KSSSVFNNKT…ELLKRLKELD (80 aa)) constitute a BRCT domain.

The protein belongs to the NAD-dependent DNA ligase family. LigA subfamily. Mg(2+) serves as cofactor. It depends on Mn(2+) as a cofactor.

It carries out the reaction NAD(+) + (deoxyribonucleotide)n-3'-hydroxyl + 5'-phospho-(deoxyribonucleotide)m = (deoxyribonucleotide)n+m + AMP + beta-nicotinamide D-nucleotide.. Its function is as follows. DNA ligase that catalyzes the formation of phosphodiester linkages between 5'-phosphoryl and 3'-hydroxyl groups in double-stranded DNA using NAD as a coenzyme and as the energy source for the reaction. It is essential for DNA replication and repair of damaged DNA. This Helicobacter pylori (strain ATCC 700392 / 26695) (Campylobacter pylori) protein is DNA ligase.